Here is a 137-residue protein sequence, read N- to C-terminus: Nucleoside diphosphate kinase (137 aa).

6 residues coordinate ATP: Lys11, Phe59, Arg87, Thr93, Arg104, and Asn114. The active-site Pros-phosphohistidine intermediate is the His117.

Belongs to the NDK family. Homotetramer. The cofactor is Mg(2+).

It localises to the cytoplasm. It catalyses the reaction a 2'-deoxyribonucleoside 5'-diphosphate + ATP = a 2'-deoxyribonucleoside 5'-triphosphate + ADP. It carries out the reaction a ribonucleoside 5'-diphosphate + ATP = a ribonucleoside 5'-triphosphate + ADP. In terms of biological role, major role in the synthesis of nucleoside triphosphates other than ATP. The ATP gamma phosphate is transferred to the NDP beta phosphate via a ping-pong mechanism, using a phosphorylated active-site intermediate. The polypeptide is Nucleoside diphosphate kinase (Frankia alni (strain DSM 45986 / CECT 9034 / ACN14a)).